A 392-amino-acid chain; its full sequence is INCREASED PETAL GROWTH ANISOTROPY 1-like protein 1 (392 aa).

Residues 11 to 52 (LLRLVKELQAYLVRNDKLEKENHELRQEVARLRAQVSNLKSH) adopt a coiled-coil conformation. Composition is skewed to polar residues over residues 65–76 (QSSYDGSNTDGS) and 100–109 (PTIQGQSTAT). The tract at residues 65 to 128 (QSSYDGSNTD…SKRTLGKRSV (64 aa)) is disordered. A coiled-coil region spans residues 269 to 299 (KDSLTQALQRIQSLQDRLEESVNNTEKMRDS).

The protein belongs to the IPGA1 family.

Its subcellular location is the cytoplasm. The protein localises to the cytoskeleton. Its function is as follows. Microtubule-associated protein probably involved in the regulation of microtubule organization. This Arabidopsis thaliana (Mouse-ear cress) protein is INCREASED PETAL GROWTH ANISOTROPY 1-like protein 1.